A 386-amino-acid chain; its full sequence is Tubulin beta-1 chain (386 aa).

Residues Glu-7, Ser-76, Gly-80, Thr-81, Gly-82, Asn-142, and Asn-164 each coordinate GTP. Glu-7 provides a ligand contact to Mg(2+). A disordered region spans residues Tyr-363–Met-386. A compositionally biased stretch (acidic residues) spans Thr-367–Met-386.

Belongs to the tubulin family. As to quaternary structure, dimer of alpha and beta chains. A typical microtubule is a hollow water-filled tube with an outer diameter of 25 nm and an inner diameter of 15 nM. Alpha-beta heterodimers associate head-to-tail to form protofilaments running lengthwise along the microtubule wall with the beta-tubulin subunit facing the microtubule plus end conferring a structural polarity. Microtubules usually have 13 protofilaments but different protofilament numbers can be found in some organisms and specialized cells. Mg(2+) is required as a cofactor.

The protein localises to the cytoplasm. It is found in the cytoskeleton. Tubulin is the major constituent of microtubules, a cylinder consisting of laterally associated linear protofilaments composed of alpha- and beta-tubulin heterodimers. Microtubules grow by the addition of GTP-tubulin dimers to the microtubule end, where a stabilizing cap forms. Below the cap, tubulin dimers are in GDP-bound state, owing to GTPase activity of alpha-tubulin. This chain is Tubulin beta-1 chain (TUBB1), found in Avena sativa (Oat).